A 480-amino-acid polypeptide reads, in one-letter code: tRNA-2-methylthio-N(6)-dimethylallyladenosine synthase (480 aa).

The 118-residue stretch at 3-120 (KKLYIKTWGC…LPEMLNQLQH (118 aa)) folds into the MTTase N-terminal domain. [4Fe-4S] cluster-binding residues include cysteine 12, cysteine 49, cysteine 83, cysteine 157, cysteine 161, and cysteine 164. The Radical SAM core domain occupies 143 to 375 (KADGASAFVS…QEQITHQALR (233 aa)). One can recognise a TRAM domain in the interval 378–441 (RQMLNTEQRV…ANSLRGELVR (64 aa)).

The protein belongs to the methylthiotransferase family. MiaB subfamily. In terms of assembly, monomer. Requires [4Fe-4S] cluster as cofactor.

It localises to the cytoplasm. It catalyses the reaction N(6)-dimethylallyladenosine(37) in tRNA + (sulfur carrier)-SH + AH2 + 2 S-adenosyl-L-methionine = 2-methylsulfanyl-N(6)-dimethylallyladenosine(37) in tRNA + (sulfur carrier)-H + 5'-deoxyadenosine + L-methionine + A + S-adenosyl-L-homocysteine + 2 H(+). Catalyzes the methylthiolation of N6-(dimethylallyl)adenosine (i(6)A), leading to the formation of 2-methylthio-N6-(dimethylallyl)adenosine (ms(2)i(6)A) at position 37 in tRNAs that read codons beginning with uridine. This Colwellia psychrerythraea (strain 34H / ATCC BAA-681) (Vibrio psychroerythus) protein is tRNA-2-methylthio-N(6)-dimethylallyladenosine synthase.